The following is a 492-amino-acid chain: MSLVMISENVKLAREYALLGNYDSAMVYYQGVLDQMNKYLYSLRDTYLQQKWQQVWQEISVEAKHVKDIMKMLESFKIDSTPPKASQQELPAHDAEVWSLPVPAERRPSPGPRKRQSAQYSDCRGHNNRISAAVRGPHRPSSRNPNDKGKAVRGREKKDQQNKGKEEKSKSTSEISESEPKKFDSTGYDKDLVEALERDIISQNPNIRWDDIADLVEAKKLLKEAVVLPMWMPEFFKGIRRPWKGVLMVGPPGTGKTLLAKAVATECKTTFFNVSSSTLTSKYRGESEKLVRLLFEMARFYAPTTIFIDEIDSICSRRGTSEEHEASRRVKAELLVQMDGVGGATENDDPSKMVMVLAATNFPWDIDEALRRRLEKRIYIPLPSAKGREELLRINLRELELADDVDLANIAEKMEGYSGADITNVCRDASLMAMRRRIEGLTPEEIRNLSRDEMHMPTTMEDFEIALKKVSKSVSAADIEKYEKWIVEFGSC.

Residues serine 80 to threonine 186 form a disordered region. The segment covering proline 145–serine 171 has biased composition (basic and acidic residues). Glycine 250 to threonine 257 contacts ATP.

The protein belongs to the AAA ATPase family. Katanin p60 subunit A1 subfamily. Can homooligomerize into hexameric rings, which may be promoted by interaction with microtubules. Interacts with KATNB1, which may serve as a targeting subunit.

It localises to the cytoplasm. The protein resides in the cytoskeleton. The protein localises to the microtubule organizing center. It is found in the centrosome. Its subcellular location is the spindle pole. It localises to the spindle. The catalysed reaction is n ATP + n H2O + a microtubule = n ADP + n phosphate + (n+1) alpha/beta tubulin heterodimers.. With respect to regulation, ATPase activity is stimulated by microtubules, which promote homooligomerization. ATP-dependent microtubule severing is stimulated by interaction with KATNB1. Functionally, catalytic subunit of a complex which severs microtubules in an ATP-dependent manner. Microtubule severing may promote rapid reorganization of cellular microtubule arrays and the release of microtubules from the centrosome following nucleation. In Gallus gallus (Chicken), this protein is Katanin p60 ATPase-containing subunit A1.